We begin with the raw amino-acid sequence, 706 residues long: Ribosomal RNA large subunit methyltransferase K/L (706 aa).

The THUMP domain occupies 43–154 (LMYQSLLWSR…RDMASVALDL (112 aa)).

The protein belongs to the methyltransferase superfamily. RlmKL family.

It is found in the cytoplasm. The catalysed reaction is guanosine(2445) in 23S rRNA + S-adenosyl-L-methionine = N(2)-methylguanosine(2445) in 23S rRNA + S-adenosyl-L-homocysteine + H(+). It catalyses the reaction guanosine(2069) in 23S rRNA + S-adenosyl-L-methionine = N(2)-methylguanosine(2069) in 23S rRNA + S-adenosyl-L-homocysteine + H(+). Functionally, specifically methylates the guanine in position 2445 (m2G2445) and the guanine in position 2069 (m7G2069) of 23S rRNA. The sequence is that of Ribosomal RNA large subunit methyltransferase K/L from Yersinia pestis bv. Antiqua (strain Antiqua).